A 132-amino-acid chain; its full sequence is Small ribosomal subunit protein uS8 (132 aa).

It belongs to the universal ribosomal protein uS8 family. Part of the 30S ribosomal subunit. Contacts proteins S5 and S12.

Functionally, one of the primary rRNA binding proteins, it binds directly to 16S rRNA central domain where it helps coordinate assembly of the platform of the 30S subunit. The chain is Small ribosomal subunit protein uS8 from Xylella fastidiosa (strain 9a5c).